The following is a 133-amino-acid chain: Phosphoribosyl-AMP cyclohydrolase (133 aa).

Asp82 is a Mg(2+) binding site. Cys83 serves as a coordination point for Zn(2+). Mg(2+) contacts are provided by Asp84 and Asp86. Cys100 and Cys107 together coordinate Zn(2+).

This sequence belongs to the PRA-CH family. As to quaternary structure, homodimer. It depends on Mg(2+) as a cofactor. The cofactor is Zn(2+).

The protein resides in the cytoplasm. It carries out the reaction 1-(5-phospho-beta-D-ribosyl)-5'-AMP + H2O = 1-(5-phospho-beta-D-ribosyl)-5-[(5-phospho-beta-D-ribosylamino)methylideneamino]imidazole-4-carboxamide. It participates in amino-acid biosynthesis; L-histidine biosynthesis; L-histidine from 5-phospho-alpha-D-ribose 1-diphosphate: step 3/9. Catalyzes the hydrolysis of the adenine ring of phosphoribosyl-AMP. This Aromatoleum aromaticum (strain DSM 19018 / LMG 30748 / EbN1) (Azoarcus sp. (strain EbN1)) protein is Phosphoribosyl-AMP cyclohydrolase.